Consider the following 315-residue polypeptide: UDP-N-acetylenolpyruvoylglucosamine reductase (315 aa).

The region spanning 27–207 is the FAD-binding PCMH-type domain; it reads RVGGPADVLY…TKRMNAITAR (181 aa). R172 is an active-site residue. Residues 214–236 form a disordered region; the sequence is IREKTSGSTFANPDPPGTPNQRK. S221 (proton donor) is an active-site residue. E297 is an active-site residue.

It belongs to the MurB family. It depends on FAD as a cofactor.

It localises to the cytoplasm. It catalyses the reaction UDP-N-acetyl-alpha-D-muramate + NADP(+) = UDP-N-acetyl-3-O-(1-carboxyvinyl)-alpha-D-glucosamine + NADPH + H(+). Its pathway is cell wall biogenesis; peptidoglycan biosynthesis. Functionally, cell wall formation. This is UDP-N-acetylenolpyruvoylglucosamine reductase from Maricaulis maris (strain MCS10) (Caulobacter maris).